The chain runs to 37 residues: Cytochrome b6-f complex subunit 5 (37 aa).

Residues 5–25 (FLFGIVLGLIPITLAGLFVTA) traverse the membrane as a helical segment.

Belongs to the PetG family. As to quaternary structure, the 4 large subunits of the cytochrome b6-f complex are cytochrome b6, subunit IV (17 kDa polypeptide, PetD), cytochrome f and the Rieske protein, while the 4 small subunits are PetG, PetL, PetM and PetN. The complex functions as a dimer.

The protein localises to the plastid. The protein resides in the chloroplast thylakoid membrane. Component of the cytochrome b6-f complex, which mediates electron transfer between photosystem II (PSII) and photosystem I (PSI), cyclic electron flow around PSI, and state transitions. PetG is required for either the stability or assembly of the cytochrome b6-f complex. This is Cytochrome b6-f complex subunit 5 from Solanum lycopersicum (Tomato).